The following is a 269-amino-acid chain: 4-hydroxy-tetrahydrodipicolinate reductase (269 aa).

NAD(+) contacts are provided by residues 12–17 (GGSGRM), 102–104 (GTT), and 126–129 (SPNM). His-159 functions as the Proton donor/acceptor in the catalytic mechanism. (S)-2,3,4,5-tetrahydrodipicolinate is bound at residue His-160. Residue Lys-163 is the Proton donor of the active site. (S)-2,3,4,5-tetrahydrodipicolinate is bound at residue 169-170 (GT).

This sequence belongs to the DapB family.

The protein localises to the cytoplasm. It catalyses the reaction (S)-2,3,4,5-tetrahydrodipicolinate + NAD(+) + H2O = (2S,4S)-4-hydroxy-2,3,4,5-tetrahydrodipicolinate + NADH + H(+). The catalysed reaction is (S)-2,3,4,5-tetrahydrodipicolinate + NADP(+) + H2O = (2S,4S)-4-hydroxy-2,3,4,5-tetrahydrodipicolinate + NADPH + H(+). It participates in amino-acid biosynthesis; L-lysine biosynthesis via DAP pathway; (S)-tetrahydrodipicolinate from L-aspartate: step 4/4. Catalyzes the conversion of 4-hydroxy-tetrahydrodipicolinate (HTPA) to tetrahydrodipicolinate. In Leptospira borgpetersenii serovar Hardjo-bovis (strain JB197), this protein is 4-hydroxy-tetrahydrodipicolinate reductase.